A 156-amino-acid polypeptide reads, in one-letter code: Endoribonuclease YbeY (156 aa).

Zn(2+)-binding residues include histidine 117, histidine 121, and histidine 127.

The protein belongs to the endoribonuclease YbeY family. The cofactor is Zn(2+).

Its subcellular location is the cytoplasm. Functionally, single strand-specific metallo-endoribonuclease involved in late-stage 70S ribosome quality control and in maturation of the 3' terminus of the 16S rRNA. This Shewanella frigidimarina (strain NCIMB 400) protein is Endoribonuclease YbeY.